The sequence spans 223 residues: All-trans retinoic acid-induced differentiation factor (223 aa).

The signal sequence occupies residues 1 to 25 (MASRESGGSRAAALLLVLGVERALA). Topologically, residues 26 to 193 (LPEICTLCPG…YKCMRQGSFS (168 aa)) are extracellular. The 42-residue stretch at 146–187 (QRDLCNSTGSPEMCPENGSCASDGPGLLQCVCADGFHGYKCM) folds into the EGF-like domain. 3 cysteine pairs are disulfide-bonded: cysteine 150-cysteine 165, cysteine 159-cysteine 175, and cysteine 177-cysteine 186. A helical membrane pass occupies residues 194 to 214 (LLMFFGILGSTTLAISILLWG). The Cytoplasmic segment spans residues 215-223 (TQRRKAKAS).

As to quaternary structure, interacts with NELL1; the interaction promotes osteoblastic differentiation and mineralization. Interacts with SLC37A3; the interaction is direct and both proteins are mutually dependent for their stability.

It localises to the nucleus envelope. The protein resides in the cell membrane. Its subcellular location is the lysosome membrane. Promotes osteoblast cell differentiation and terminal mineralization. Plays a role in inducing the cell cycle arrest via inhibiting CCND1 expression in all-trans-retinoic acid (ATRA) signal pathway. In osteoclasts, forms a transporter complex with ATRAID for nitrogen-containing-bisphophonates (N-BPs) required for releasing N-BP molecules that have trafficked to lysosomes through fluid-phase endocytosis into the cytosol. This Mus musculus (Mouse) protein is All-trans retinoic acid-induced differentiation factor (Atraid).